The following is a 423-amino-acid chain: uncharacterized protein (423 aa).

The region spanning 75-145 is the BON domain; it reads LHVVVTQPIA…PIVNNIKVAG (71 aa).

This sequence belongs to the bacterial secretin family.

Involved in the secretion of an unknown compound. This is an uncharacterized protein from Sinorhizobium fredii (strain NBRC 101917 / NGR234).